A 303-amino-acid polypeptide reads, in one-letter code: UDP-3-O-acyl-N-acetylglucosamine deacetylase (303 aa).

H78, H237, and D241 together coordinate Zn(2+). H264 functions as the Proton donor in the catalytic mechanism.

The protein belongs to the LpxC family. Requires Zn(2+) as cofactor.

It carries out the reaction a UDP-3-O-[(3R)-3-hydroxyacyl]-N-acetyl-alpha-D-glucosamine + H2O = a UDP-3-O-[(3R)-3-hydroxyacyl]-alpha-D-glucosamine + acetate. It participates in glycolipid biosynthesis; lipid IV(A) biosynthesis; lipid IV(A) from (3R)-3-hydroxytetradecanoyl-[acyl-carrier-protein] and UDP-N-acetyl-alpha-D-glucosamine: step 2/6. Catalyzes the hydrolysis of UDP-3-O-myristoyl-N-acetylglucosamine to form UDP-3-O-myristoylglucosamine and acetate, the committed step in lipid A biosynthesis. The sequence is that of UDP-3-O-acyl-N-acetylglucosamine deacetylase from Coxiella burnetii (strain CbuG_Q212) (Coxiella burnetii (strain Q212)).